The sequence spans 1036 residues: MYLVAGDRGLAGCGHLLVSLLGLLLLLARSGTRALVCLPCDESKCEEPRNCPGSIVQGVCGCCYTCASQRNESCGGTFGIYGTCDRGLRCVIRPPLNGDSLTEYEAGVCEDENWTDDQLLGFKPCNENLIAGCNIINGKCECNTIRTCSNPFEFPSQDMCLSALKRIEEEKPDCSKARCEVQFSPRCPEDSVLIEGYAPPGECCPLPSRCVCNPAGCLRKVCQPGNLNILVSKASGKPGECCDLYECKPVFGVDCRTVECPPVQQTACPPDSYETQVRLTADGCCTLPTRCECLSGLCGFPVCEVGSTPRIVSRGDGTPGKCCDVFECVNDTKPACVFNNVEYYDGDMFRMDNCRFCRCQGGVAICFTAQCGEINCERYYVPEGECCPVCEDPVYPFNNPAGCYANGLILAHGDRWREDDCTFCQCVNGERHCVATVCGQTCTNPVKVPGECCPVCEEPTIITVDPPACGELSNCTLTGKDCINGFKRDHNGCRTCQCINTEELCSERKQGCTLNCPFGFLTDAQNCEICECRPRPKKCRPIICDKYCPLGLLKNKHGCDICRCKKCPELSCSKICPLGFQQDSHGCLICKCREASASAGPPILSGTCLTVDGHHHKNEESWHDGCRECYCLNGREMCALITCPVPACGNPTIHPGQCCPSCADDFVVQKPELSTPSICHAPGGEYFVEGETWNIDSCTQCTCHSGRVLCETEVCPPLLCQNPSRTQDSCCPQCTDQPFRPSLSRNNSVPNYCKNDEGDIFLAAESWKPDVCTSCICIDSVISCFSESCPSVSCERPVLRKGQCCPYCIEDTIPKKVVCHFSGKAYADEERWDLDSCTHCYCLQGQTLCSTVSCPPLPCVEPINVEGSCCPMCPEMYVPEPTNIPIEKTNHRGEVDLEVPLWPTPSENDIVHLPRDMGHLQVDYRDNRLHPSEDSSLDSIASVVVPIIICLSIIIAFLFINQKKQWIPLLCWYRTPTKPSSLNNQLVSVDCKKGTRVQVDSSQRMLRIAEPDARFSGFYSMQKQNHLQADNFYQTV.

An N-terminal signal peptide occupies residues 1–34 (MYLVAGDRGLAGCGHLLVSLLGLLLLLARSGTRA). The region spanning 35-112 (LVCLPCDESK…EYEAGVCEDE (78 aa)) is the IGFBP N-terminal domain. The Extracellular segment spans residues 35-939 (LVCLPCDESK…HPSEDSSLDS (905 aa)). 4 cysteine pairs are disulfide-bonded: cysteine 37–cysteine 60, cysteine 40–cysteine 62, cysteine 45–cysteine 63, and cysteine 51–cysteine 66. An N-linked (GlcNAc...) asparagine glycan is attached at asparagine 71. Disulfide bonds link cysteine 74–cysteine 90 and cysteine 84–cysteine 109. Asparagine 113 carries an N-linked (GlcNAc...) asparagine glycan. The short motif at 314–316 (RGD) is the Cell attachment site element. N-linked (GlcNAc...) asparagine glycosylation is present at asparagine 330. 2 consecutive VWFC domains span residues 334-391 (PACV…PVCE) and 401-457 (AGCY…PVCE). 4 Antistasin-like domains span residues 469-498 (CGEL…TCQC), 505-532 (CSER…ICEC), 539-564 (CRPI…ICRC), and 567-592 (CPEL…ICKC). Residue asparagine 474 is glycosylated (N-linked (GlcNAc...) asparagine). 2 consecutive VWFC domains span residues 606–663 (GTCL…PSCA) and 677–735 (SICH…PQCT). Asparagine 746 is a glycosylation site (N-linked (GlcNAc...) asparagine). VWFC domains are found at residues 751–809 (NYCK…PYCI) and 817–874 (VVCH…PMCP). Residues 940–960 (IASVVVPIIICLSIIIAFLFI) traverse the membrane as a helical segment. Topologically, residues 961 to 1036 (NQKKQWIPLL…LQADNFYQTV (76 aa)) are cytoplasmic. Threonine 1035 is modified (phosphothreonine).

In terms of assembly, interacts with BMP4 and BMP7. In terms of processing, N-glycosylated. Expressed in pancreas, kidney, skeletal muscle, lung, placenta, brain, heart, spleen, liver and small intestine. Expressed in blood vessels (at protein level).

Its subcellular location is the secreted. It localises to the cell membrane. Its function is as follows. May play a role in CNS development by interacting with growth factors implicated in motor neuron differentiation and survival. May play a role in capillary formation and maintenance during angiogenesis. Modulates BMP activity by affecting its processing and delivery to the cell surface. The sequence is that of Cysteine-rich motor neuron 1 protein (CRIM1) from Homo sapiens (Human).